Reading from the N-terminus, the 222-residue chain is Vespryn (222 aa).

An N-terminal signal peptide occupies residues Met-1–Gln-44. The propeptide occupies Glu-45–Ala-52. Residues Ser-53 to Leu-159 enclose the B30.2/SPRY domain. Positions Arg-160 to Leu-222 are excised as a propeptide. The N-linked (GlcNAc...) asparagine glycan is linked to Asn-195.

It belongs to the ohanin/vespryn family. In terms of tissue distribution, expressed by the venom gland.

The protein localises to the secreted. Functionally, neurotoxin that produces dose-dependent hypolocomotion and hyperalgesia in mice. May directly act on the central nervous system, as it is 6500-fold more potent when administered intracerebroventricularly than intraperitoneal. The sequence is that of Vespryn from Crotalus adamanteus (Eastern diamondback rattlesnake).